A 157-amino-acid chain; its full sequence is Transcription elongation factor GreA (157 aa).

Belongs to the GreA/GreB family.

Necessary for efficient RNA polymerase transcription elongation past template-encoded arresting sites. The arresting sites in DNA have the property of trapping a certain fraction of elongating RNA polymerases that pass through, resulting in locked ternary complexes. Cleavage of the nascent transcript by cleavage factors such as GreA or GreB allows the resumption of elongation from the new 3'terminus. GreA releases sequences of 2 to 3 nucleotides. This Hyphomonas neptunium (strain ATCC 15444) protein is Transcription elongation factor GreA.